The sequence spans 395 residues: S-adenosylmethionine synthase (395 aa).

An ATP-binding site is contributed by His-14. Asp-16 provides a ligand contact to Mg(2+). K(+) is bound at residue Glu-42. Residues Glu-55 and Gln-98 each contribute to the L-methionine site. The tract at residues 98 to 108 (QSPDIAMGVNK) is flexible loop. ATP-binding positions include 174–176 (DGK), 240–241 (RF), Asp-249, 255–256 (RK), Ala-272, and Lys-276. Residue Asp-249 coordinates L-methionine. Lys-280 serves as a coordination point for L-methionine.

It belongs to the AdoMet synthase family. Homotetramer; dimer of dimers. The cofactor is Mg(2+). K(+) serves as cofactor.

The protein localises to the cytoplasm. It carries out the reaction L-methionine + ATP + H2O = S-adenosyl-L-methionine + phosphate + diphosphate. It functions in the pathway amino-acid biosynthesis; S-adenosyl-L-methionine biosynthesis; S-adenosyl-L-methionine from L-methionine: step 1/1. Functionally, catalyzes the formation of S-adenosylmethionine (AdoMet) from methionine and ATP. The overall synthetic reaction is composed of two sequential steps, AdoMet formation and the subsequent tripolyphosphate hydrolysis which occurs prior to release of AdoMet from the enzyme. In Caldanaerobacter subterraneus subsp. tengcongensis (strain DSM 15242 / JCM 11007 / NBRC 100824 / MB4) (Thermoanaerobacter tengcongensis), this protein is S-adenosylmethionine synthase.